The primary structure comprises 142 residues: MPTPSMEDYIEQIYLLIDEKGYARVSDIAEALSVHPSSVTKMVQKLDKDEYLIYEKYRGLVLTTKGKKIGERLVYRHDLLEQFMRIIGVDESKIYNDVEGIEHHLSWEAIDRIGDLVQYFEQDAVRVETLRGVQRANEEKSN.

An HTH dtxR-type domain is found at 1 to 63 (MPTPSMEDYI…YEKYRGLVLT (63 aa)). Mn(2+) is bound by residues Asp8, Glu11, His77, Glu99, Glu102, and His103.

Belongs to the DtxR/MntR family. Homodimer.

Its subcellular location is the cytoplasm. Its activity is regulated as follows. DNA binding is strongly activated by Mn(2+). Its function is as follows. Central regulator of manganese homeostasis. This is HTH-type transcriptional regulator MntR from Bacillus cereus (strain B4264).